The sequence spans 255 residues: Dehydrogenase/reductase SDR family member 11 (255 aa).

The N-terminal stretch at 1 to 23 (MERWTGRVALVTGASVGIGAAVA) is a signal peptide. NADP(+) is bound by residues 13–18 (GASVGI), 38–39 (RS), Glu-44, 65–66 (DL), and Asn-92. Positions 146 and 161 each coordinate substrate. NADP(+) is bound by residues Tyr-161, Lys-165, 196-199 (VETG), and Lys-203. Catalysis depends on Tyr-161, which acts as the Proton acceptor.

Belongs to the short-chain dehydrogenases/reductases (SDR) family.

It localises to the secreted. The enzyme catalyses a 3beta-hydroxysteroid + NADP(+) = a 3-oxosteroid + NADPH + H(+). The catalysed reaction is 17beta-estradiol + NAD(+) = estrone + NADH + H(+). It catalyses the reaction 17beta-estradiol + NADP(+) = estrone + NADPH + H(+). It functions in the pathway steroid biosynthesis; estrogen biosynthesis. Its activity is regulated as follows. Inhibited by flavonoids including apigenin, luteolin, genistein, kaempferol and quercetin and also by carbenoxolone, zearalenone, glycyrrhetinic, curcumin and flufenamic acid. Functionally, catalyzes the conversion of the 17-keto group of estrone, 4- and 5-androstenes and 5-alpha-androstanes into their 17-beta-hydroxyl metabolites and the conversion of the 3-keto group of 3-, 3,17- and 3,20- diketosteroids into their 3-hydroxyl metabolites. Exhibits reductive 3-beta-hydroxysteroid dehydrogenase activity toward 5-beta-androstanes, 5-beta-pregnanes, 4-pregnenes and bile acids. May also reduce endogenous and exogenous alpha-dicarbonyl compounds and xenobiotic alicyclic ketones. The polypeptide is Dehydrogenase/reductase SDR family member 11 (DHRS11) (Gallus gallus (Chicken)).